Here is a 242-residue protein sequence, read N- to C-terminus: Type III pantothenate kinase (242 aa).

6 to 13 contacts ATP; the sequence is DIGNSVAK. Residues Y86 and 93-96 each bind substrate; that span reads GMDR. D95 functions as the Proton acceptor in the catalytic mechanism. K(+) is bound at residue D116. Position 119 (T119) interacts with ATP. Position 171 (T171) interacts with substrate.

Belongs to the type III pantothenate kinase family. In terms of assembly, homodimer. It depends on NH4(+) as a cofactor. The cofactor is K(+).

It is found in the cytoplasm. The catalysed reaction is (R)-pantothenate + ATP = (R)-4'-phosphopantothenate + ADP + H(+). Its pathway is cofactor biosynthesis; coenzyme A biosynthesis; CoA from (R)-pantothenate: step 1/5. Functionally, catalyzes the phosphorylation of pantothenate (Pan), the first step in CoA biosynthesis. This Phocaeicola vulgatus (strain ATCC 8482 / DSM 1447 / JCM 5826 / CCUG 4940 / NBRC 14291 / NCTC 11154) (Bacteroides vulgatus) protein is Type III pantothenate kinase.